A 103-amino-acid polypeptide reads, in one-letter code: Large ribosomal subunit protein bL21 (103 aa).

This sequence belongs to the bacterial ribosomal protein bL21 family. As to quaternary structure, part of the 50S ribosomal subunit. Contacts protein L20.

This protein binds to 23S rRNA in the presence of protein L20. The chain is Large ribosomal subunit protein bL21 from Pseudomonas syringae pv. syringae (strain B728a).